The following is a 688-amino-acid chain: Lipase (688 aa).

Residues 1 to 35 (MKTRQNKYSIRKFSVGASSILIAALLFMGGGSAQA) form the signal peptide. The segment at 31–309 (GSAQAAEQQQ…KSAKQKQYKN (279 aa)) is disordered. A propeptide spans 36-302 (AEQQQDKGTV…KNEDQTNKSA (267 aa)) (removed in mature form). The segment covering 45 to 54 (VENSTTQSIG) has biased composition (polar residues). Composition is skewed to basic and acidic residues over residues 84-95 (ESLHNETPKNED) and 103-143 (SQND…KHAS). Polar residues-rich tracts occupy residues 144–175 (ENNQTLHSKAAQSNEDVKTKPSQLDNTTAQQE) and 184–211 (KQDTQSSKTTDLLRATGQNQSKDSQSTE). Basic and acidic residues predominate over residues 227–268 (KNDDDKVETFNLNSKEEPLKVDKQANPTTDKDKSSKNDKGSH). Residues 274–289 (LESNAVATTNKQSKQQ) are compositionally biased toward polar residues. The active-site Nucleophile is the Ser-418. The active-site Charge relay system is the Asp-609. Asp-647 contacts Ca(2+). Catalysis depends on His-648, which acts as the Charge relay system. 3 residues coordinate Ca(2+): Asp-650, Asp-655, and Asp-658.

It belongs to the AB hydrolase superfamily. Lipase family.

It localises to the secreted. The enzyme catalyses a triacylglycerol + H2O = a diacylglycerol + a fatty acid + H(+). In Staphylococcus epidermidis (strain ATCC 35984 / DSM 28319 / BCRC 17069 / CCUG 31568 / BM 3577 / RP62A), this protein is Lipase (lip).